Consider the following 132-residue polypeptide: MEVLRYRSRPIVGGEAEGPAVVIDSLSFYGEVDPETGVTSGGKPLAGRVAAIRRSRGSTVGSYVIYALKENGVAPLAILMERAEPIVIAGCVLAGIPLYDGLPPEFFERVRDGYRVRVHSDGLVEVLGPGQP.

S58 serves as the catalytic Proton acceptor.

The protein belongs to the AcnX type II small subunit family. As to quaternary structure, heterodimer composed of a large subunit (PMDh-L) and a small subunit (PMDh-S).

The enzyme catalyses (R)-5-phosphomevalonate = (2E)-3-methyl-5-phosphooxypent-2-enoate + H2O. The protein operates within isoprenoid biosynthesis; isopentenyl diphosphate biosynthesis via mevalonate pathway. With respect to regulation, neither the addition of 1 mM Mg(2+) nor 1 mM Mn(2+) has a significant effect on the activity, whereas Zn(2+) causes almost complete inactivation. Strongly inhibited by H(2)O(2), but not by EDTA or iodoacetamide. In terms of biological role, component of a hydro-lyase that catalyzes the dehydration of mevalonate 5-phosphate (MVA5P) to form trans-anhydromevalonate 5-phosphate (tAHMP). Involved in the archaeal mevalonate (MVA) pathway, which provides fundamental precursors for isoprenoid biosynthesis, such as isopentenyl diphosphate (IPP) and dimethylallyl diphosphate (DMAPP). This Aeropyrum pernix (strain ATCC 700893 / DSM 11879 / JCM 9820 / NBRC 100138 / K1) protein is Phosphomevalonate dehydratase small subunit.